Consider the following 332-residue polypeptide: MAALKDQLIHNLLKEEHVPQNKITVVGVGAVGMACAISILMKDLADELALVDVMEDKLKGEMMDLQHGSLFLRTPKIVSGKDYSVTANSKLVIITAGARQQEGESRLNLVQRNVNIFKFIIPNVVKYSPHCKLLVVSNPVDILTYVAWKISGFPKNRVIGSGCNLDSARFRYLMGERLGVHALSCHGWILGEHGDSSVPVWSGMNVAGVSLKTLHPELGTDADKEQWKQVHKQVVDSAYEVIKLKGYTTWAIGLSVADLAESIMKNLRRVHPISTMLKGLYGIKEDVFLSVPCVLGQNGISDVVKVTLTSEEEAHLKKSADTLWGIQKELQF.

Position 2 is an N-acetylalanine (alanine 2). N6-acetyllysine; alternate is present on lysine 5. At lysine 5 the chain carries N6-succinyllysine; alternate. Lysine 14 bears the N6-acetyllysine mark. Glycine 29 to lysine 57 provides a ligand contact to NAD(+). Lysine 57 carries the post-translational modification N6-acetyllysine; alternate. Lysine 57 participates in a covalent cross-link: Glycyl lysine isopeptide (Lys-Gly) (interchain with G-Cter in SUMO2); alternate. Lysine 81 is subject to N6-acetyllysine. Residue arginine 99 coordinates NAD(+). Residue arginine 106 coordinates substrate. Lysine 118 carries the N6-acetyllysine; alternate modification. N6-succinyllysine; alternate is present on lysine 118. Residue lysine 126 is modified to N6-acetyllysine. Residue asparagine 138 participates in NAD(+) binding. Asparagine 138 and arginine 169 together coordinate substrate. Histidine 193 acts as the Proton acceptor in catalysis. Residues lysine 224 and lysine 232 each carry the N6-acetyllysine modification. The residue at position 239 (tyrosine 239) is a Phosphotyrosine. An N6-acetyllysine modification is found at lysine 243. Threonine 248 provides a ligand contact to substrate. Threonine 309 carries the post-translational modification Phosphothreonine. A Phosphoserine modification is found at serine 310. Lysine 318 is subject to N6-acetyllysine; alternate. At lysine 318 the chain carries N6-succinyllysine; alternate. Position 322 is a phosphothreonine (threonine 322).

It belongs to the LDH/MDH superfamily. LDH family. In terms of assembly, homotetramer. Interacts with PTEN upstream reading frame protein MP31. In terms of processing, ISGylated.

Its subcellular location is the cytoplasm. The catalysed reaction is (S)-lactate + NAD(+) = pyruvate + NADH + H(+). Its pathway is fermentation; pyruvate fermentation to lactate; (S)-lactate from pyruvate: step 1/1. Its function is as follows. Interconverts simultaneously and stereospecifically pyruvate and lactate with concomitant interconversion of NADH and NAD(+). This chain is L-lactate dehydrogenase A chain (LDHA), found in Oryctolagus cuniculus (Rabbit).